The chain runs to 303 residues: Oxygen-dependent coproporphyrinogen-III oxidase (303 aa).

Ser-93 contacts substrate. A divalent metal cation is bound by residues His-97 and His-107. His-107 acts as the Proton donor in catalysis. Position 109 to 111 (Asn-109 to Arg-111) interacts with substrate. The a divalent metal cation site is built by His-146 and His-176. Positions Tyr-241–Gly-276 are important for dimerization. Gly-259 to Arg-261 provides a ligand contact to substrate.

It belongs to the aerobic coproporphyrinogen-III oxidase family. Homodimer. It depends on a divalent metal cation as a cofactor.

The protein resides in the cytoplasm. It catalyses the reaction coproporphyrinogen III + O2 + 2 H(+) = protoporphyrinogen IX + 2 CO2 + 2 H2O. It participates in porphyrin-containing compound metabolism; protoporphyrin-IX biosynthesis; protoporphyrinogen-IX from coproporphyrinogen-III (O2 route): step 1/1. Its function is as follows. Involved in the heme biosynthesis. Catalyzes the aerobic oxidative decarboxylation of propionate groups of rings A and B of coproporphyrinogen-III to yield the vinyl groups in protoporphyrinogen-IX. This chain is Oxygen-dependent coproporphyrinogen-III oxidase, found in Pseudomonas putida (strain ATCC 700007 / DSM 6899 / JCM 31910 / BCRC 17059 / LMG 24140 / F1).